The sequence spans 585 residues: Frizzled-10 (585 aa).

The signal sequence occupies residues 1–24 (MGPAAGNLVRAVLALCWLAEHCAG). The Extracellular segment spans residues 25-229 (ISSIDIERPG…DVYWSKDDKQ (205 aa)). Positions 33–154 (PGDGRCQPIE…NDPNYLCMEA (122 aa)) constitute an FZ domain. 5 cysteine pairs are disulfide-bonded: Cys-38-Cys-99, Cys-46-Cys-92, Cys-83-Cys-121, Cys-110-Cys-151, and Cys-114-Cys-138. N-linked (GlcNAc...) asparagine glycosylation is present at Asn-52. The segment at 155-195 (PNNGSDEPPRGSSMLPPMFRPQRPSTGHDLQQHKDSLSRTS) is disordered. Asn-157 is a glycosylation site (N-linked (GlcNAc...) asparagine). The helical transmembrane segment at 230 to 250 (FAVIWIAIWSILCFFSSAFTV) threads the bilayer. The Cytoplasmic portion of the chain corresponds to 251–265 (LTFLIDPQRFKYPER). Residues 266–286 (PIIFLSMCYCVYSVGYIIRLF) traverse the membrane as a helical segment. Residues 287–314 (SGAESIACDRDSGQLYVIQEGLESTGCT) are Extracellular-facing. A helical transmembrane segment spans residues 315 to 335 (IVFLVLYYFGMASSLWWVILT). The Cytoplasmic portion of the chain corresponds to 336-355 (LTWFLAAGKKWGHEAIEANS). A helical transmembrane segment spans residues 356–376 (SYFHLAAWAIPAVKTIMILVM). Residues 377–397 (RRVAGDELTGLCYVGSMDVNA) are Extracellular-facing. The chain crosses the membrane as a helical span at residues 398–418 (LTGFVLIPLACYLIIGTSFIL). Residues 419 to 447 (SGFVALFHIRRVMKTGGENTDKLEKLMVR) are Cytoplasmic-facing. Residues 448–468 (IGVFSVLYTVPATCVIACYFY) form a helical membrane-spanning segment. The Extracellular portion of the chain corresponds to 469 to 506 (ERLNMDYWKIVASQQKCKMNNQTKNLDCMMNNSIPAVE). N-linked (GlcNAc...) asparagine glycosylation is found at Asn-489 and Asn-499. Residues 507 to 527 (IFMVKIFMLLVVGITSGMWIW) form a helical membrane-spanning segment. Over 528–585 (TSKTLQSWQNVCSRRLKKRSRRKPASVITSSGIYKKPQHPQKTHLAKYESTLQPPTCV) the chain is Cytoplasmic. The Lys-Thr-X-X-X-Trp motif, mediates interaction with the PDZ domain of Dvl family members motif lies at 530-535 (KTLQSW). The short motif at 583 to 585 (TCV) is the PDZ-binding element.

It belongs to the G-protein coupled receptor Fz/Smo family. In terms of assembly, interacts with WNT7A. In terms of tissue distribution, expressed in the dorsal ectoderm overlying the developing spinal cord.

It localises to the cell membrane. Receptor for Wnt proteins. Functions in the canonical Wnt/beta-catenin signaling pathway. Activation by WNT7A induces expression of beta-catenin target genes. The canonical Wnt/beta-catenin signaling pathway leads to the activation of disheveled proteins, inhibition of GSK-3 kinase, nuclear accumulation of beta-catenin and activation of Wnt target genes. A second signaling pathway involving PKC and calcium fluxes has been seen for some family members, but it is not yet clear if it represents a distinct pathway or if it can be integrated in the canonical pathway, as PKC seems to be required for Wnt-mediated inactivation of GSK-3 kinase. Both pathways seem to involve interactions with G-proteins. May be involved in transduction and intercellular transmission of polarity information during tissue morphogenesis and/or in differentiated tissues. The sequence is that of Frizzled-10 (FZD10) from Gallus gallus (Chicken).